The primary structure comprises 606 residues: Sodium-independent sulfate anion transporter (606 aa).

The Extracellular segment spans residues 1 to 51 (MPSSVTALGQARSSGPGMAPSACCCSPAALQRRLPILAWLPSYSLQWLKMD). Residues 52–72 (FVAGLSVGLTAIPQALAYAEV) form a helical membrane-spanning segment. A73 is a topological domain (cytoplasmic). A helical transmembrane segment spans residues 74–94 (GLPPQYGLYSAFMGCFVYFFL). At 95 to 100 (GTSRDV) the chain is on the extracellular side. The chain crosses the membrane as a helical span at residues 101–117 (TLGPTAIMSLLVSFYTF). Residues 118 to 119 (HE) lie on the Cytoplasmic side of the membrane. Residues 120–140 (PAYAVLLAFLSGCIQLAMGVL) traverse the membrane as a helical segment. Residues 141 to 147 (RLGFLLD) lie on the Extracellular side of the membrane. Residues 148–168 (FISYPVIKGFTSAAAVTIGFG) traverse the membrane as a helical segment. Residues 169–197 (QIKNLLGLQNIPRPFFLQVYHTFLRIAET) lie on the Cytoplasmic side of the membrane. Residues 198-218 (RVGDAVLGLVCMLLLLVLKLM) traverse the membrane as a helical segment. Over 219-250 (RDHVPPVHPEMPPGVRLSRGLVWAATTARNAL) the chain is Extracellular. A helical membrane pass occupies residues 251–271 (VVSFAALVAYSFEVTGYQPFI). The Cytoplasmic segment spans residues 272–307 (LTGETAEGLPPVRIPPFSVTTANGTISFTEMVQDMG). The chain crosses the membrane as a helical span at residues 308 to 328 (AGLAVVPLMGLLESIAVAKAF). At 329-341 (ASQNNYRIDANQE) the chain is on the extracellular side. Residues 342–362 (LLAIGLTNMLGSLVSSYPVTG) form a helical membrane-spanning segment. Residues 363–374 (SFGRTAVNAQSG) lie on the Cytoplasmic side of the membrane. Residues 375–395 (VCTPAGGLVTGVLVLLSLDYL) traverse the membrane as a helical segment. The Extracellular segment spans residues 396–398 (TSL). A helical membrane pass occupies residues 399–419 (FYYIPKSALAAVIIMAVAPLF). The Cytoplasmic segment spans residues 420-441 (DTKIFRTLWRVKRLDLLPLCVT). Residues 442 to 462 (FLLCFWEVQYGILAGALVSLL) form a helical membrane-spanning segment. The Extracellular portion of the chain corresponds to 463 to 606 (MLLHSAARPE…LDQKVALLKA (144 aa)). The STAS domain occupies 470-584 (RPETKVSEGP…EAEKHLRQEP (115 aa)).

It belongs to the SLC26A/SulP transporter (TC 2.A.53) family. As to expression, detected in all tissues tested with highest expression observed in brain, kidney, HEVEC and placenta and lowest in pancreas, skeletal muscle, liver, lung and heart.

It localises to the cell membrane. It is found in the lysosome membrane. The protein localises to the apical cell membrane. Its subcellular location is the basolateral cell membrane. The enzyme catalyses hydrogencarbonate(in) + chloride(out) = hydrogencarbonate(out) + chloride(in). It carries out the reaction sulfate(in) + H(+)(in) = sulfate(out) + H(+)(out). The catalysed reaction is oxalate(in) + chloride(out) = oxalate(out) + chloride(in). Functionally, sodium-independent anion exchanger mediating bicarbonate, chloride, sulfate and oxalate transport. Exhibits sodium-independent sulfate anion transporter activity that may cooperate with SLC26A2 to mediate DIDS-sensitive sulfate uptake into high endothelial venules endothelial cells (HEVEC). In the kidney, mediates chloride-bicarbonate exchange, facilitating V-ATPase-mediated acid secretion. May function as a chloride channel, playing an important role in moderating chloride homeostasis and neuronal activity in the cerebellum. This chain is Sodium-independent sulfate anion transporter, found in Homo sapiens (Human).